We begin with the raw amino-acid sequence, 897 residues long: Beta-galactosidase (897 aa).

The active-site Proton donor is Glu459. Residue Glu525 is the Nucleophile of the active site.

This sequence belongs to the glycosyl hydrolase 2 family.

It carries out the reaction Hydrolysis of terminal non-reducing beta-D-galactose residues in beta-D-galactosides.. The protein is Beta-galactosidase (cbgA) of Clostridium acetobutylicum.